The sequence spans 302 residues: Recombination-associated protein RdgC (302 aa).

Belongs to the RdgC family.

It is found in the cytoplasm. The protein resides in the nucleoid. In terms of biological role, may be involved in recombination. The polypeptide is Recombination-associated protein RdgC (Xylella fastidiosa (strain M12)).